A 169-amino-acid chain; its full sequence is Prolyl-tRNA synthetase associated domain-containing protein 1 (169 aa).

This sequence belongs to the PRORSD1 family.

The protein is Prolyl-tRNA synthetase associated domain-containing protein 1 (Prorsd1) of Mus musculus (Mouse).